The following is a 257-amino-acid chain: Small ribosomal subunit protein uS2 (257 aa).

This sequence belongs to the universal ribosomal protein uS2 family.

This Trichlorobacter lovleyi (strain ATCC BAA-1151 / DSM 17278 / SZ) (Geobacter lovleyi) protein is Small ribosomal subunit protein uS2.